We begin with the raw amino-acid sequence, 82 residues long: Protein WFDC11 (82 aa).

The first 21 residues, 1 to 21, serve as a signal peptide directing secretion; that stretch reads MKPSWFPCLVFLCMLLLSALG.

The protein resides in the secreted. The polypeptide is Protein WFDC11 (Wfdc11) (Mus musculus (Mouse)).